The following is a 602-amino-acid chain: 4-hydroxy-3-methylbut-2-en-1-yl diphosphate synthase (flavodoxin) (602 aa).

Positions 508, 511, 543, and 550 each coordinate [4Fe-4S] cluster.

Belongs to the IspG family. [4Fe-4S] cluster is required as a cofactor.

It catalyses the reaction (2E)-4-hydroxy-3-methylbut-2-enyl diphosphate + oxidized [flavodoxin] + H2O + 2 H(+) = 2-C-methyl-D-erythritol 2,4-cyclic diphosphate + reduced [flavodoxin]. It participates in isoprenoid biosynthesis; isopentenyl diphosphate biosynthesis via DXP pathway; isopentenyl diphosphate from 1-deoxy-D-xylulose 5-phosphate: step 5/6. Converts 2C-methyl-D-erythritol 2,4-cyclodiphosphate (ME-2,4cPP) into 1-hydroxy-2-methyl-2-(E)-butenyl 4-diphosphate. The sequence is that of 4-hydroxy-3-methylbut-2-en-1-yl diphosphate synthase (flavodoxin) from Chlamydia trachomatis serovar L2b (strain UCH-1/proctitis).